The following is a 270-amino-acid chain: Fibroblast growth factor 5 (270 aa).

Positions 1–20 are cleaved as a signal peptide; it reads MSLSFLLLLFLSHLILSAWA. The segment at 26–83 is disordered; that stretch reads LAPKGQPGPAATGRNPAGASSSRSSRGTTSSSSSSVSSSHSASLGNQGSGLEQSSFQW. Low complexity predominate over residues 43 to 68; the sequence is GASSSRSSRGTTSSSSSSVSSSHSAS. The segment covering 69–83 has biased composition (polar residues); that stretch reads LGNQGSGLEQSSFQW. A glycan (N-linked (GlcNAc...) asparagine) is linked at N112. The tract at residues 236 to 257 is disordered; sequence PEKKKPPSPVKPKVPLSAPRKS.

This sequence belongs to the heparin-binding growth factors family. Interacts with FGFR1 and FGFR2. Affinity between fibroblast growth factors (FGFs) and their receptors is increased by heparan sulfate glycosaminoglycans that function as coreceptors. As to expression, expressed in skin.

Its subcellular location is the secreted. In terms of biological role, plays an important role in the regulation of cell proliferation and cell differentiation. Required for normal regulation of the hair growth cycle. Functions as an inhibitor of hair elongation by promoting progression from anagen, the growth phase of the hair follicle, into catagen the apoptosis-induced regression phase. This chain is Fibroblast growth factor 5 (FGF5), found in Felis catus (Cat).